A 684-amino-acid polypeptide reads, in one-letter code: DNA-directed RNA polymerase subunit beta' (684 aa).

4 residues coordinate Zn(2+): Cys-69, Cys-71, Cys-87, and Cys-90. Residues Asp-491, Asp-493, and Asp-495 each coordinate Mg(2+).

The protein belongs to the RNA polymerase beta' chain family. RpoC1 subfamily. As to quaternary structure, in plastids the minimal PEP RNA polymerase catalytic core is composed of four subunits: alpha, beta, beta', and beta''. When a (nuclear-encoded) sigma factor is associated with the core the holoenzyme is formed, which can initiate transcription. Mg(2+) is required as a cofactor. It depends on Zn(2+) as a cofactor.

Its subcellular location is the plastid. It is found in the chloroplast. The enzyme catalyses RNA(n) + a ribonucleoside 5'-triphosphate = RNA(n+1) + diphosphate. Its function is as follows. DNA-dependent RNA polymerase catalyzes the transcription of DNA into RNA using the four ribonucleoside triphosphates as substrates. The sequence is that of DNA-directed RNA polymerase subunit beta' from Phaseolus vulgaris (Kidney bean).